Here is a 428-residue protein sequence, read N- to C-terminus: MSAIVDIVGREVLDSRGNPTVECDVLLESGVMGRAAVPSGASTGSREAIEMRDGDPRRYQGKGVLKAVEHVNTEISEAVLGLDASEQAFLDKTLIDLDGTENKSRLGANAMLAVSMAVARAAAEESGLPLYRYLGGMGSVQLPVPMMNVINGGAHANNSLDLQEFMIIPVGAPNFREALRWGAEVFHALKKIIHDLGMSTAVGDEGGFAPSVENHEAAIRLILQAITAAGYSAGEQIALGLDCAASEFYQDGLYVLHGEGGLKLSAPQWIDMLAAWVDKYPIISIEDGMHEGDQDGWKQLSERLRDKVQLVGDDLFVTNTRLLQQGIDQRIANSILIKINQIGTLTETFAAIEMAKRAGYTAVISHRSGETEDCTIADIAVGTNAGQIKTGSLSRSDRIAKYNQLLRIEEDLGEVAQYPGRAAFRHLR.

Q163 is a binding site for (2R)-2-phosphoglycerate. E205 functions as the Proton donor in the catalytic mechanism. Positions 242, 286, and 313 each coordinate Mg(2+). 4 residues coordinate (2R)-2-phosphoglycerate: K338, R367, S368, and K389. The Proton acceptor role is filled by K338.

This sequence belongs to the enolase family. Mg(2+) is required as a cofactor.

The protein resides in the cytoplasm. Its subcellular location is the secreted. It is found in the cell surface. It carries out the reaction (2R)-2-phosphoglycerate = phosphoenolpyruvate + H2O. Its pathway is carbohydrate degradation; glycolysis; pyruvate from D-glyceraldehyde 3-phosphate: step 4/5. Functionally, catalyzes the reversible conversion of 2-phosphoglycerate (2-PG) into phosphoenolpyruvate (PEP). It is essential for the degradation of carbohydrates via glycolysis. This chain is Enolase, found in Verminephrobacter eiseniae (strain EF01-2).